The chain runs to 236 residues: MSKNSKAYREAAEKIDAGRIYSPLEAANLVKETSSKNYDASIDVAIRLGVDPRKADQLVRGTVSLPNGTGKTVRVAVFAQGEKATEAEAAGADFVGTDELVEKIQGGWTDFDVAIATPDQMAKIGRIARVLGPRGLMPNPKTGTVTNDVAKAIEEVKGGKISFRVDKASNLHAAIGKASFDAKKLAENYGALLDEIIRIKPSSAKGIYVKRVTLSSTTGPGVEVDTHVTKNYAEEA.

Belongs to the universal ribosomal protein uL1 family. Part of the 50S ribosomal subunit.

Its function is as follows. Binds directly to 23S rRNA. The L1 stalk is quite mobile in the ribosome, and is involved in E site tRNA release. Functionally, protein L1 is also a translational repressor protein, it controls the translation of the L11 operon by binding to its mRNA. In Corynebacterium glutamicum (strain R), this protein is Large ribosomal subunit protein uL1.